Here is a 126-residue protein sequence, read N- to C-terminus: Fluoride-specific ion channel FluC (126 aa).

4 helical membrane passes run 6-26, 36-56, 69-89, and 99-119; these read FLAVGVGAALGAWLRWALAIL, YGTLAANLVGGYLIGVAVGFF, LVITGFLGGLTTFSTFSGEVV, and IGVLHIVAHLGGSLFLTMLGF. G76 and T79 together coordinate Na(+).

This sequence belongs to the fluoride channel Fluc/FEX (TC 1.A.43) family.

It localises to the cell inner membrane. The catalysed reaction is fluoride(in) = fluoride(out). With respect to regulation, na(+) is not transported, but it plays an essential structural role and its presence is essential for fluoride channel function. Fluoride-specific ion channel. Important for reducing fluoride concentration in the cell, thus reducing its toxicity. The sequence is that of Fluoride-specific ion channel FluC from Ralstonia pickettii (strain 12J).